The chain runs to 183 residues: Protein Syd (183 aa).

This sequence belongs to the Syd family.

It is found in the cell inner membrane. In terms of biological role, interacts with the SecY protein in vivo. May bind preferentially to an uncomplexed state of SecY, thus functioning either as a chelating agent for excess SecY in the cell or as a regulatory factor that negatively controls the translocase function. This is Protein Syd from Idiomarina loihiensis (strain ATCC BAA-735 / DSM 15497 / L2-TR).